An 82-amino-acid polypeptide reads, in one-letter code: Cytochrome b-c1 complex subunit 8 (82 aa).

Residues 1–39 (MGREFGNLTRIRHVISYSLSPFEQRAFPHYFSKGIPNVL) are Mitochondrial matrix-facing. The residue at position 16 (serine 16) is a Phosphoserine. Lysine 33 bears the N6-acetyllysine; alternate mark. Lysine 33 is subject to N6-succinyllysine; alternate. The chain crosses the membrane as a helical span at residues 40 to 68 (RRTRERILRVAPPFVLFYLIYTWGNQEFA). Topologically, residues 69 to 82 (QSKRKNPAKYENDK) are mitochondrial intermembrane.

The protein belongs to the UQCRQ/QCR8 family. In terms of assembly, component of the ubiquinol-cytochrome c oxidoreductase (cytochrome b-c1 complex, complex III, CIII), a multisubunit enzyme composed of 11 subunits. The complex is composed of 3 respiratory subunits cytochrome b, cytochrome c1 and Rieske protein UQCRFS1, 2 core protein subunits UQCRC1/QCR1 and UQCRC2/QCR2, and 6 low-molecular weight protein subunits UQCRH/QCR6, UQCRB/QCR7, UQCRQ/QCR8, UQCR10/QCR9, UQCR11/QCR10 and subunit 9, the cleavage product of Rieske protein UQCRFS1. The complex exists as an obligatory dimer and forms supercomplexes (SCs) in the inner mitochondrial membrane with NADH-ubiquinone oxidoreductase (complex I, CI) and cytochrome c oxidase (complex IV, CIV), resulting in different assemblies (supercomplex SCI(1)III(2)IV(1) and megacomplex MCI(2)III(2)IV(2)). Interacts with UQCC6.

It is found in the mitochondrion inner membrane. Component of the ubiquinol-cytochrome c oxidoreductase, a multisubunit transmembrane complex that is part of the mitochondrial electron transport chain which drives oxidative phosphorylation. The respiratory chain contains 3 multisubunit complexes succinate dehydrogenase (complex II, CII), ubiquinol-cytochrome c oxidoreductase (cytochrome b-c1 complex, complex III, CIII) and cytochrome c oxidase (complex IV, CIV), that cooperate to transfer electrons derived from NADH and succinate to molecular oxygen, creating an electrochemical gradient over the inner membrane that drives transmembrane transport and the ATP synthase. The cytochrome b-c1 complex catalyzes electron transfer from ubiquinol to cytochrome c, linking this redox reaction to translocation of protons across the mitochondrial inner membrane, with protons being carried across the membrane as hydrogens on the quinol. In the process called Q cycle, 2 protons are consumed from the matrix, 4 protons are released into the intermembrane space and 2 electrons are passed to cytochrome c. The polypeptide is Cytochrome b-c1 complex subunit 8 (Uqcrq) (Rattus norvegicus (Rat)).